Here is a 90-residue protein sequence, read N- to C-terminus: Putative sodium channel toxin Ts35 (90 aa).

A signal peptide spans 1-22; that stretch reads QDEVGLGSCSVIFVVGNEEGEA. In terms of domain architecture, LCN-type CS-alpha/beta spans 23–87; the sequence is KDGYAVGGDR…WGNPTLGPCL (65 aa). Cystine bridges form between cysteine 33/cysteine 86, cysteine 37/cysteine 61, cysteine 46/cysteine 66, and cysteine 50/cysteine 68.

The protein belongs to the long (4 C-C) scorpion toxin superfamily. Sodium channel inhibitor family. Expressed by the venom gland.

Its subcellular location is the secreted. Its function is as follows. Putative sodium channel toxin. The chain is Putative sodium channel toxin Ts35 from Tityus serrulatus (Brazilian scorpion).